The primary structure comprises 952 residues: G patch domain-containing protein 1 homolog (952 aa).

Disordered stretches follow at residues 104 to 127, 165 to 233, 320 to 345, 370 to 432, 660 to 711, and 822 to 952; these read QGIR…QRRR, GWKP…DDYE, DKKP…EDNS, RSRF…KDHS, PEKV…RNKP, and VAPE…KSKH. Over residues 107–123 the composition is skewed to basic and acidic residues; that stretch reads RTRDEFANEDEQKQRSD. Positions 153–199 constitute a G-patch domain; that stretch reads RDKVAVRILKSMGWKPGQGVGPRQTRKEKRQATARNSKEQYLMEHYG. The span at 214–233 shows a compositional bias: acidic residues; that stretch reads DSNNEDEDDEDITFAPDDYE. A compositionally biased stretch (basic residues) spans 323-333; it reads PKQKKQQHVQQ. Composition is skewed to basic and acidic residues over residues 375–402, 414–432, and 679–691; these read PMDK…DLNP, QEEK…KDHS, and IQDK…EPSK. Residues 886–896 show a composition bias toward low complexity; it reads ASSSNESSSSD. Composition is skewed to basic residues over residues 906 to 934 and 941 to 952; these read KLSK…KKSK and HKAKKKKKKSKH.

The protein belongs to the GPATCH1 family.

The sequence is that of G patch domain-containing protein 1 homolog from Drosophila melanogaster (Fruit fly).